A 693-amino-acid polypeptide reads, in one-letter code: Phosphoribosylformylglycinamidine synthase subunit PurL (693 aa).

Residue histidine 34 is part of the active site. Residues tyrosine 37 and lysine 76 each contribute to the ATP site. A Mg(2+)-binding site is contributed by glutamate 78. Substrate-binding positions include 79–82 and arginine 101; that span reads SHNH. Histidine 80 acts as the Proton acceptor in catalysis. Aspartate 102 provides a ligand contact to Mg(2+). Glutamine 222 is a binding site for substrate. Aspartate 248 is a Mg(2+) binding site. Residue 292 to 294 participates in substrate binding; that stretch reads ETQ. Residues aspartate 470 and glycine 507 each contribute to the ATP site. Serine 510 lines the substrate pocket.

This sequence belongs to the FGAMS family. As to quaternary structure, monomer. Part of the FGAM synthase complex composed of 1 PurL, 1 PurQ and 2 PurS subunits.

It localises to the cytoplasm. The catalysed reaction is N(2)-formyl-N(1)-(5-phospho-beta-D-ribosyl)glycinamide + L-glutamine + ATP + H2O = 2-formamido-N(1)-(5-O-phospho-beta-D-ribosyl)acetamidine + L-glutamate + ADP + phosphate + H(+). The protein operates within purine metabolism; IMP biosynthesis via de novo pathway; 5-amino-1-(5-phospho-D-ribosyl)imidazole from N(2)-formyl-N(1)-(5-phospho-D-ribosyl)glycinamide: step 1/2. Its function is as follows. Part of the phosphoribosylformylglycinamidine synthase complex involved in the purines biosynthetic pathway. Catalyzes the ATP-dependent conversion of formylglycinamide ribonucleotide (FGAR) and glutamine to yield formylglycinamidine ribonucleotide (FGAM) and glutamate. The FGAM synthase complex is composed of three subunits. PurQ produces an ammonia molecule by converting glutamine to glutamate. PurL transfers the ammonia molecule to FGAR to form FGAM in an ATP-dependent manner. PurS interacts with PurQ and PurL and is thought to assist in the transfer of the ammonia molecule from PurQ to PurL. This is Phosphoribosylformylglycinamidine synthase subunit PurL from Pyrobaculum islandicum (strain DSM 4184 / JCM 9189 / GEO3).